The following is a 134-amino-acid chain: Small ribosomal subunit protein uS8c (134 aa).

The protein belongs to the universal ribosomal protein uS8 family. Part of the 30S ribosomal subunit.

Its subcellular location is the plastid. The protein resides in the chloroplast. Functionally, one of the primary rRNA binding proteins, it binds directly to 16S rRNA central domain where it helps coordinate assembly of the platform of the 30S subunit. The protein is Small ribosomal subunit protein uS8c (rps8) of Aethionema cordifolium (Lebanon stonecress).